A 237-amino-acid chain; its full sequence is Pyridoxine 5'-phosphate synthase (237 aa).

3-amino-2-oxopropyl phosphate is bound by residues Asn-7 and Arg-18. His-43 serves as the catalytic Proton acceptor. Positions 45 and 50 each coordinate 1-deoxy-D-xylulose 5-phosphate. Glu-70 functions as the Proton acceptor in the catalytic mechanism. Residue Thr-100 coordinates 1-deoxy-D-xylulose 5-phosphate. His-190 serves as the catalytic Proton donor. Residues Asp-191 and 213 to 214 (GH) each bind 3-amino-2-oxopropyl phosphate.

Belongs to the PNP synthase family. In terms of assembly, homooctamer; tetramer of dimers.

It is found in the cytoplasm. It catalyses the reaction 3-amino-2-oxopropyl phosphate + 1-deoxy-D-xylulose 5-phosphate = pyridoxine 5'-phosphate + phosphate + 2 H2O + H(+). Its pathway is cofactor biosynthesis; pyridoxine 5'-phosphate biosynthesis; pyridoxine 5'-phosphate from D-erythrose 4-phosphate: step 5/5. In terms of biological role, catalyzes the complicated ring closure reaction between the two acyclic compounds 1-deoxy-D-xylulose-5-phosphate (DXP) and 3-amino-2-oxopropyl phosphate (1-amino-acetone-3-phosphate or AAP) to form pyridoxine 5'-phosphate (PNP) and inorganic phosphate. The polypeptide is Pyridoxine 5'-phosphate synthase (Flavobacterium johnsoniae (strain ATCC 17061 / DSM 2064 / JCM 8514 / BCRC 14874 / CCUG 350202 / NBRC 14942 / NCIMB 11054 / UW101) (Cytophaga johnsonae)).